Consider the following 188-residue polypeptide: Trafficking protein particle complex subunit 5 (188 aa).

Serine 10 is modified (phosphoserine).

Belongs to the TRAPP small subunits family. BET3 subfamily. As to quaternary structure, component of the multisubunit TRAPP (transport protein particle) complex, which includes at least TRAPPC2, TRAPPC2L, TRAPPC3, TRAPPC3L, TRAPPC4, TRAPPC5, TRAPPC8, TRAPPC9, TRAPPC10, TRAPPC11 and TRAPPC12.

It localises to the golgi apparatus. Its subcellular location is the cis-Golgi network. It is found in the endoplasmic reticulum. Functionally, may play a role in vesicular transport from endoplasmic reticulum to Golgi. In Mus musculus (Mouse), this protein is Trafficking protein particle complex subunit 5 (Trappc5).